Here is a 183-residue protein sequence, read N- to C-terminus: uncharacterized protein (183 aa).

Positions 55–183 (PRAAVLLVDL…RSRRGSRPAR (129 aa)) constitute a GGDEF domain.

In terms of biological role, might be involved in pSAM2 replication control. This is an uncharacterized protein from Streptomyces ambofaciens.